Here is a 461-residue protein sequence, read N- to C-terminus: Argininosuccinate lyase (461 aa).

2-(N(omega)-L-arginino)succinate-binding residues include Ser-28, Asn-115, and Thr-160. His-161 functions as the Proton acceptor in the catalytic mechanism. Ser-282 functions as the Proton donor in the catalytic mechanism. 2-(N(omega)-L-arginino)succinate is bound by residues Asn-290, Tyr-322, Gln-327, and Lys-330.

This sequence belongs to the lyase 1 family. Argininosuccinate lyase subfamily. As to quaternary structure, homotetramer.

It carries out the reaction 2-(N(omega)-L-arginino)succinate = fumarate + L-arginine. Its pathway is amino-acid biosynthesis; L-arginine biosynthesis; L-arginine from L-ornithine and carbamoyl phosphate: step 3/3. The chain is Argininosuccinate lyase (arg7) from Schizosaccharomyces pombe (strain 972 / ATCC 24843) (Fission yeast).